Reading from the N-terminus, the 426-residue chain is Glutamate-1-semialdehyde 2,1-aminomutase (426 aa).

The residue at position 265 (K265) is an N6-(pyridoxal phosphate)lysine.

This sequence belongs to the class-III pyridoxal-phosphate-dependent aminotransferase family. HemL subfamily. Homodimer. Pyridoxal 5'-phosphate is required as a cofactor.

The protein resides in the cytoplasm. The catalysed reaction is (S)-4-amino-5-oxopentanoate = 5-aminolevulinate. The protein operates within porphyrin-containing compound metabolism; protoporphyrin-IX biosynthesis; 5-aminolevulinate from L-glutamyl-tRNA(Glu): step 2/2. The polypeptide is Glutamate-1-semialdehyde 2,1-aminomutase (Salmonella enteritidis PT4 (strain P125109)).